We begin with the raw amino-acid sequence, 365 residues long: Embryonic developmental protein tofu-6 (365 aa).

One can recognise an RRM domain in the interval 13 to 90; that stretch reads AGFHIRNVPK…YSLKVSDHKN (78 aa).

Its function is as follows. Required maternally for early embryonic cell divisions. May have a role in DNA replication. The protein is Embryonic developmental protein tofu-6 of Caenorhabditis briggsae.